The primary structure comprises 272 residues: Alcohol dehydrogenase-related 31 kDa protein (272 aa).

11-34 (YVADCGGIALETSKVLMTKNIAKL) lines the NAD(+) pocket. Residue serine 139 coordinates substrate. Tyrosine 152 serves as the catalytic Proton acceptor.

Belongs to the short-chain dehydrogenases/reductases (SDR) family.

The protein is Alcohol dehydrogenase-related 31 kDa protein (Adhr) of Drosophila mauritiana (Fruit fly).